A 217-amino-acid chain; its full sequence is Octanoyltransferase (217 aa).

The BPL/LPL catalytic domain maps to 32–207 (SESPDELWIV…TFSQLLGYQH (176 aa)). Substrate-binding positions include 71 to 78 (RGGQVTYH), 138 to 140 (SLG), and 151 to 153 (GLA). Cys-169 (acyl-thioester intermediate) is an active-site residue.

This sequence belongs to the LipB family.

Its subcellular location is the cytoplasm. The enzyme catalyses octanoyl-[ACP] + L-lysyl-[protein] = N(6)-octanoyl-L-lysyl-[protein] + holo-[ACP] + H(+). It participates in protein modification; protein lipoylation via endogenous pathway; protein N(6)-(lipoyl)lysine from octanoyl-[acyl-carrier-protein]: step 1/2. Functionally, catalyzes the transfer of endogenously produced octanoic acid from octanoyl-acyl-carrier-protein onto the lipoyl domains of lipoate-dependent enzymes. Lipoyl-ACP can also act as a substrate although octanoyl-ACP is likely to be the physiological substrate. The chain is Octanoyltransferase from Shewanella sp. (strain W3-18-1).